The primary structure comprises 84 residues: MAGERAQNLQDTFLNHVRKNKIPLTIFLVNGVKLQGVVTWFDNFCVLLRRDGHSQLVYKHAISTIMPGHPVQLFEQGEEGAEKG.

The region spanning 11 to 71 (DTFLNHVRKN…ISTIMPGHPV (61 aa)) is the Sm domain.

Belongs to the Hfq family. In terms of assembly, homohexamer.

Functionally, RNA chaperone that binds small regulatory RNA (sRNAs) and mRNAs to facilitate mRNA translational regulation in response to envelope stress, environmental stress and changes in metabolite concentrations. Also binds with high specificity to tRNAs. This is RNA-binding protein Hfq from Methylobacterium nodulans (strain LMG 21967 / CNCM I-2342 / ORS 2060).